Reading from the N-terminus, the 509-residue chain is Protein root UVB sensitive 5 (509 aa).

A disordered region spans residues 22–49 (CQPKRRRVEHLRCSAQPSSIREDDEDAD).

The protein belongs to the RUS1 family.

The polypeptide is Protein root UVB sensitive 5 (Arabidopsis thaliana (Mouse-ear cress)).